A 360-amino-acid polypeptide reads, in one-letter code: S-adenosylmethionine:tRNA ribosyltransferase-isomerase (360 aa).

It belongs to the QueA family. As to quaternary structure, monomer.

Its subcellular location is the cytoplasm. The catalysed reaction is 7-aminomethyl-7-carbaguanosine(34) in tRNA + S-adenosyl-L-methionine = epoxyqueuosine(34) in tRNA + adenine + L-methionine + 2 H(+). Its pathway is tRNA modification; tRNA-queuosine biosynthesis. Transfers and isomerizes the ribose moiety from AdoMet to the 7-aminomethyl group of 7-deazaguanine (preQ1-tRNA) to give epoxyqueuosine (oQ-tRNA). The protein is S-adenosylmethionine:tRNA ribosyltransferase-isomerase of Rhodopseudomonas palustris (strain BisB5).